The following is a 351-amino-acid chain: 1-aminocyclopropane-1-carboxylate oxidase homolog 4 (351 aa).

The Fe2OG dioxygenase domain occupies 200–304; it reads KSQYMVGQHY…AIVFSTFMRA (105 aa). The Fe cation site is built by H224, D226, and H280. R291 serves as a coordination point for 2-oxoglutarate.

Belongs to the iron/ascorbate-dependent oxidoreductase family. Requires Fe(2+) as cofactor.

The chain is 1-aminocyclopropane-1-carboxylate oxidase homolog 4 from Arabidopsis thaliana (Mouse-ear cress).